A 610-amino-acid chain; its full sequence is E-selectin (610 aa).

An N-terminal signal peptide occupies residues 1–21 (MIASQFLSALTLVLLIKESGA). A C-type lectin domain is found at 22–138 (WSYSASTTNM…CNKKKLALCY (117 aa)). Residues 22 to 555 (WSYSASTTNM…CEATAKSNIP (534 aa)) lie on the Extracellular side of the membrane. The N-linked (GlcNAc...) asparagine glycan is linked to Asn30. Cystine bridges form between Cys40–Cys137, Cys110–Cys129, Cys142–Cys153, Cys147–Cys162, Cys164–Cys173, Cys179–Cys223, Cys192–Cys205, Cys209–Cys236, Cys241–Cys285, Cys254–Cys267, Cys271–Cys298, Cys303–Cys348, Cys334–Cys361, Cys366–Cys411, Cys397–Cys424, Cys429–Cys474, Cys460–Cys487, Cys492–Cys533, and Cys519–Cys546. Glu101, Asn103, and Glu108 together coordinate Ca(2+). A carbohydrate is bound by residues 101–108 (EPNNKQNE), 112–117 (EIYIKR), and 125–127 (NDE). Residues Asn125 and Asp126 each coordinate Ca(2+). The 36-residue stretch at 139 to 174 (TAACTHTSCSGHGECVETINNYTCQCHPGFTGLRCE) folds into the EGF-like domain. Asn159 carries an N-linked (GlcNAc...) asparagine glycan. 6 Sushi domains span residues 177–238 (VTCQ…ACHV), 239–300 (VECD…TCKA), 314–363 (VNCS…VCKA), 365–426 (QCKA…TCEA), 428–489 (RCDA…SCQV), and 490–548 (VQCA…TCEA). 2 N-linked (GlcNAc...) asparagine glycosylation sites follow: Asn198 and Asn202. A glycan (N-linked (GlcNAc...) asparagine) is linked at Asn264. N-linked (GlcNAc...) asparagine glycans are attached at residues Asn315, Asn327, and Asn331. Asn526 carries an N-linked (GlcNAc...) asparagine glycan. Residues 556 to 577 (LTVGLSAAGTSLLTLASFLFWL) traverse the membrane as a helical segment. At 578–610 (LKRLRRKAKKFVPASSYQSLQSDGSYQMPSESA) the chain is on the cytoplasmic side.

This sequence belongs to the selectin/LECAM family. In terms of assembly, interacts with SELPLG/PSGL1 and PODXL2 through the sialyl Lewis X epitope. SELPLG sulfation appears not to be required for this interaction.

The protein localises to the cell membrane. In terms of biological role, cell-surface glycoprotein having a role in immunoadhesion. Mediates in the adhesion of blood neutrophils in cytokine-activated endothelium through interaction with SELPLG/PSGL1. May have a role in capillary morphogenesis. The sequence is that of E-selectin (SELE) from Equus caballus (Horse).